Reading from the N-terminus, the 150-residue chain is Large ribosomal subunit protein bL9 (150 aa).

It belongs to the bacterial ribosomal protein bL9 family.

Binds to the 23S rRNA. In Streptococcus gordonii (strain Challis / ATCC 35105 / BCRC 15272 / CH1 / DL1 / V288), this protein is Large ribosomal subunit protein bL9.